The chain runs to 772 residues: MFDVKTVSLEWGGKTLTLETGRIARQADGAVLATYGETVVLCAVTAAKSVKEGQDFFPLTVHYQEKYSAAGRIPGGFFKRERGATEKETLVSRLIDRPVRPLFPEGFYNEINVIAQVLSYDGETEPDIVAMIAASAALTISGVPFMGPIAAARVGFIEGEYVLNPKQDVALADGRLDLVVAATDTAVMMVESEAKELSEDEMLGAVLFAHDEIKKVIGAIIQLAEKAAKDPWDIDLSDNTADIKKKLKDLVGKDVAAAYKLTDKSARSNALNEARAKAKAAFAEEGAQTQMVAMKTMKKVEADIVRGAILKDGQRIDGRTTTQVRPIEAIVGFLPRTHGSSLFTRGETQAICTTTLGTKDAEQMIDGLEGLRYENFMLHYNFPPYSVGEVGRFGAPGRREVGHGKLAWRALHPVLPTKEEFPYTIRILSDITESNGSSSMATVCGGCLSMMDAGVPVKRPVSGIAMGLILEGDKFAVLSDILGDEDHLGDMDFKVAGTSEGITTMQMDIKVAGITREIFEVALRQASEGRAHILGEMTKALGEARTELSAHAPRIETLQIDKSKIRDVIGTGGKVIREIVATTGAKVDIDDEGLIKISSSDLTQIEAAKNWILGIVEEAEVGKIYKGKVVNIVDFGAFVNFMGGKDGLVHVSEMKNERVEKPTDVVKEGQDVYVKVLEIDQRGKVRLSMRVVDQETGAELEDTRPPREPREPRGDRGDRGDRGDRRGPRGDRGPRREGGDRGPRREGGDRPRRDRDDGPAPDHMPAFLKSDD.

Residues D486 and D492 each contribute to the Mg(2+) site. The KH domain occupies P553–I612. The 69-residue stretch at G622–R690 folds into the S1 motif domain. The disordered stretch occupies residues E695–D772. Residues E701–A760 show a composition bias toward basic and acidic residues.

This sequence belongs to the polyribonucleotide nucleotidyltransferase family. The cofactor is Mg(2+).

It localises to the cytoplasm. The enzyme catalyses RNA(n+1) + phosphate = RNA(n) + a ribonucleoside 5'-diphosphate. In terms of biological role, involved in mRNA degradation. Catalyzes the phosphorolysis of single-stranded polyribonucleotides processively in the 3'- to 5'-direction. In Novosphingobium aromaticivorans (strain ATCC 700278 / DSM 12444 / CCUG 56034 / CIP 105152 / NBRC 16084 / F199), this protein is Polyribonucleotide nucleotidyltransferase.